The sequence spans 348 residues: tRNA pseudouridine synthase D (348 aa).

The active-site Nucleophile is the aspartate 81. Residues 158-304 (GVPNYFGAQR…MRHERRSIEL (147 aa)) enclose the TRUD domain.

The protein belongs to the pseudouridine synthase TruD family.

The enzyme catalyses uridine(13) in tRNA = pseudouridine(13) in tRNA. In terms of biological role, responsible for synthesis of pseudouridine from uracil-13 in transfer RNAs. The sequence is that of tRNA pseudouridine synthase D from Aliivibrio salmonicida (strain LFI1238) (Vibrio salmonicida (strain LFI1238)).